Reading from the N-terminus, the 144-residue chain is Small ribosomal subunit protein eS12 (144 aa).

This sequence belongs to the eukaryotic ribosomal protein eS12 family.

The protein is Small ribosomal subunit protein eS12 (RPS12) of Trypanosoma brucei brucei.